The sequence spans 61 residues: Small ribosomal subunit protein uS14 (61 aa).

Zn(2+) contacts are provided by cysteine 24, cysteine 27, cysteine 40, and cysteine 43.

Belongs to the universal ribosomal protein uS14 family. Zinc-binding uS14 subfamily. As to quaternary structure, part of the 30S ribosomal subunit. Contacts proteins S3 and S10. It depends on Zn(2+) as a cofactor.

Binds 16S rRNA, required for the assembly of 30S particles and may also be responsible for determining the conformation of the 16S rRNA at the A site. The polypeptide is Small ribosomal subunit protein uS14 (Spiroplasma citri).